We begin with the raw amino-acid sequence, 358 residues long: MSAASLRLVDTPMDKQKALDAALGQIERAFGKGSIMKLGAREAMAETEAISTGSLGLDIALGIGGLPRGRIVEIYGPESSGKTTLALHAIAEAQKAGGTCAFVDAEHALDPAYARKLGVDVDELLISQPDAGEQALEIADTLVRSGAIDVLVVDSVAALVPRAELEGEMGDSHVGLHARLMSQALRKLTGSISKSRCLVIFINQIRLKIGVMFGNPETTTGGNALKFYASIRLDIRRIGAIKDRDNVVGNQTRVKVVKNKMAPPFRVVEFDIMYGEGVSKVGELLDLGIQAGVVEKSGAWFSYDGQRIGQGRENAKTFLRNNAAVAEAIEAKVRANAGLVASAMMGAPESDGDAASPD.

76-83 contacts ATP; the sequence is GPESSGKT.

This sequence belongs to the RecA family.

The protein localises to the cytoplasm. Its function is as follows. Can catalyze the hydrolysis of ATP in the presence of single-stranded DNA, the ATP-dependent uptake of single-stranded DNA by duplex DNA, and the ATP-dependent hybridization of homologous single-stranded DNAs. It interacts with LexA causing its activation and leading to its autocatalytic cleavage. This chain is Protein RecA, found in Rhodospirillum centenum (strain ATCC 51521 / SW).